A 399-amino-acid chain; its full sequence is Succinate--CoA ligase [ADP-forming] subunit beta (399 aa).

Residues lysine 9–glutamate 254 enclose the ATP-grasp domain. Residues lysine 46, glycine 53–glycine 55, glutamate 109, alanine 112, and glutamate 117 contribute to the ATP site. Residues asparagine 209 and aspartate 223 each contribute to the Mg(2+) site. Residues asparagine 274 and glycine 331–methionine 333 each bind substrate.

The protein belongs to the succinate/malate CoA ligase beta subunit family. As to quaternary structure, heterotetramer of two alpha and two beta subunits. Requires Mg(2+) as cofactor.

It catalyses the reaction succinate + ATP + CoA = succinyl-CoA + ADP + phosphate. The enzyme catalyses GTP + succinate + CoA = succinyl-CoA + GDP + phosphate. The protein operates within carbohydrate metabolism; tricarboxylic acid cycle; succinate from succinyl-CoA (ligase route): step 1/1. Succinyl-CoA synthetase functions in the citric acid cycle (TCA), coupling the hydrolysis of succinyl-CoA to the synthesis of either ATP or GTP and thus represents the only step of substrate-level phosphorylation in the TCA. The beta subunit provides nucleotide specificity of the enzyme and binds the substrate succinate, while the binding sites for coenzyme A and phosphate are found in the alpha subunit. This Caulobacter sp. (strain K31) protein is Succinate--CoA ligase [ADP-forming] subunit beta.